Reading from the N-terminus, the 1262-residue chain is DNA-directed RNA polymerase subunit beta' (1262 aa).

Zn(2+) contacts are provided by Cys220, Cys294, Cys301, and Cys304.

This sequence belongs to the RNA polymerase beta' chain family. RpoC2 subfamily. In cyanobacteria the RNAP catalytic core is composed of 2 alpha, 1 beta, 1 beta', 1 gamma and 1 omega subunit. When a sigma factor is associated with the core the holoenzyme is formed, which can initiate transcription. Zn(2+) serves as cofactor.

The catalysed reaction is RNA(n) + a ribonucleoside 5'-triphosphate = RNA(n+1) + diphosphate. In terms of biological role, DNA-dependent RNA polymerase catalyzes the transcription of DNA into RNA using the four ribonucleoside triphosphates as substrates. The protein is DNA-directed RNA polymerase subunit beta' of Gloeobacter violaceus (strain ATCC 29082 / PCC 7421).